The sequence spans 266 residues: Glutamate racemase 1 (266 aa).

Residues 11–12 and 43–44 contribute to the substrate site; these read DS and YG. Catalysis depends on Cys74, which acts as the Proton donor/acceptor. 75 to 76 contributes to the substrate binding site; the sequence is NT. Cys182 (proton donor/acceptor) is an active-site residue. 183-184 serves as a coordination point for substrate; the sequence is TH.

The protein belongs to the aspartate/glutamate racemases family.

It carries out the reaction L-glutamate = D-glutamate. It participates in cell wall biogenesis; peptidoglycan biosynthesis. Provides the (R)-glutamate required for cell wall biosynthesis. The polypeptide is Glutamate racemase 1 (Caldanaerobacter subterraneus subsp. tengcongensis (strain DSM 15242 / JCM 11007 / NBRC 100824 / MB4) (Thermoanaerobacter tengcongensis)).